Reading from the N-terminus, the 142-residue chain is Hemoglobin subunit pi (142 aa).

The Globin domain maps to 2–142 (ALTQAEKAAV…ISSVLTEKYR (141 aa)). The heme b site is built by histidine 59 and histidine 88.

It belongs to the globin family.

Functionally, the pi' chain is the counterpart of the alpha chain in the major early embryonic hemoglobin P. The polypeptide is Hemoglobin subunit pi (Gallus gallus (Chicken)).